A 132-amino-acid chain; its full sequence is L-ectoine synthase (132 aa).

Belongs to the ectoine synthase family.

It catalyses the reaction (2S)-4-acetamido-2-aminobutanoate = L-ectoine + H2O. It participates in amine and polyamine biosynthesis; ectoine biosynthesis; L-ectoine from L-aspartate 4-semialdehyde: step 3/3. Catalyzes the circularization of gamma-N-acetyl-alpha,gamma-diaminobutyric acid (ADABA) to ectoine (1,4,5,6-tetrahydro-2-methyl-4-pyrimidine carboxylic acid), which is an excellent osmoprotectant. This is L-ectoine synthase from Saccharophagus degradans (strain 2-40 / ATCC 43961 / DSM 17024).